Consider the following 376-residue polypeptide: Chaperone protein DnaJ (376 aa).

Residues 5–70 (DYYEVLGVAK…QKRAAYDQYG (66 aa)) form the J domain. The CR-type zinc-finger motif lies at 136–214 (GYDTQIRVPS…CHGSGKVKET (79 aa)). Zn(2+) contacts are provided by C149, C152, C166, C169, C188, C191, C202, and C205. CXXCXGXG motif repeat units follow at residues 149-156 (CGVCHGSG), 166-173 (CPTCHGQG), 188-195 (CPKCHGTG), and 202-209 (CAHCHGSG).

The protein belongs to the DnaJ family. In terms of assembly, homodimer. Requires Zn(2+) as cofactor.

It is found in the cytoplasm. In terms of biological role, participates actively in the response to hyperosmotic and heat shock by preventing the aggregation of stress-denatured proteins and by disaggregating proteins, also in an autonomous, DnaK-independent fashion. Unfolded proteins bind initially to DnaJ; upon interaction with the DnaJ-bound protein, DnaK hydrolyzes its bound ATP, resulting in the formation of a stable complex. GrpE releases ADP from DnaK; ATP binding to DnaK triggers the release of the substrate protein, thus completing the reaction cycle. Several rounds of ATP-dependent interactions between DnaJ, DnaK and GrpE are required for fully efficient folding. Also involved, together with DnaK and GrpE, in the DNA replication of plasmids through activation of initiation proteins. This chain is Chaperone protein DnaJ, found in Burkholderia mallei (strain NCTC 10229).